Here is a 536-residue protein sequence, read N- to C-terminus: Pre-mRNA 3'-end-processing factor FIP1 (536 aa).

2 stretches are compositionally biased toward basic and acidic residues: residues 1-10 (MSAGEVERLV) and 32-42 (VHVHSDLAKDL). Disordered stretches follow at residues 1–95 (MSAG…EDDV), 212–246 (VQQG…GLPP), and 300–536 (FPPG…APAE). Residues 1 to 110 (MSAGEVERLV…DIKTGAPQYG (110 aa)) form a sufficient for interaction with PAPOLA region. Residues 1–296 (MSAGEVERLV…TEVDNNFSKP (296 aa)) form a necessary for stimulating PAPOLA activity region. Composition is skewed to acidic residues over residues 43–54 (DENEVERPEEEN) and 80–94 (TEDD…DEDD). A phosphoserine mark is found at Ser84, Ser86, and Ser88. The interval 136-219 (KGVDLDAPGS…ITVQQGRTGN (84 aa)) is sufficient for interaction with CPSF4. The segment covering 300-344 (FPPGAPPTHLPPPPFLPPPPTVSTAPPLIPPPGFPPPPGAPPPSL) has biased composition (pro residues). The residue at position 366 (Tyr366) is a Phosphotyrosine. The segment covering 374 to 390 (LTSSAPSWPSLVDTTKQ) has biased composition (polar residues). The segment at 383–536 (SLVDTTKQWD…QESTEAAPAE (154 aa)) is sufficient for interaction with CPSF1 and CSTF3. A compositionally biased stretch (basic and acidic residues) spans 394–434 (YARREKDRDRDRERDRDRERERDRDRERERTRERERERDHS). Residues 397 to 432 (REKDRDRDRERDRDRERERDRDRERERTRERERERD) form an arg/Asp/Glu-rich domain region. The residue at position 434 (Ser434) is a Phosphoserine. Thr436 is subject to Phosphothreonine. A phosphoserine mark is found at Ser438 and Ser442. A compositionally biased stretch (basic and acidic residues) spans 443–470 (DEERYRYREYAERGYERHRASREKEERH). Residues 484-493 (KSSRSNSRRR) show a composition bias toward basic residues. Position 496 is a phosphoserine (Ser496). Residues 502-512 (HRRHKHKKSKR) are compositionally biased toward basic residues.

It belongs to the FIP1 family. Component of the cleavage and polyadenylation specificity factor (CPSF) complex, composed of CPSF1, CPSF2, CPSF3, CPSF4 and FIP1L1. Found in a complex with CPSF1, FIP1L1 and PAPOLA. Interacts with CPSF1, CPSF4, CSTF2 and CSTF3. Interacts with AHCYL1 (when phosphorylated); the interaction is direct and associates AHCYL1 with the CPSF complex and RNA. Interacts with PAPOLA; the interaction seems to be increased by the interaction with AHCYL1. Interacts with NUDT21/CPSF5; this interaction occurs in a RNA sequence-specific manner. Interacts (preferentially via unphosphorylated form and Arg/Glu/Asp-rich domain) with CPSF6 (via Arg/Ser-rich domain); this interaction mediates, at least in part, the interaction between the CFIm and CPSF complexes and may be inhibited by CPSF6 hyper-phosphorylation. Interacts (preferentially via unphosphorylated form and Arg/Asp/Glu-rich domain) with CPSF7 (via Arg/Ser-rich domain); this interaction mediates, at least in part, the interaction between the CFIm and CPSF complexes and may be inhibited by CPSF7 hyper-phosphorylation.

Its subcellular location is the nucleus. In terms of biological role, component of the cleavage and polyadenylation specificity factor (CPSF) complex that plays a key role in pre-mRNA 3'-end formation, recognizing the AAUAAA signal sequence and interacting with poly(A) polymerase and other factors to bring about cleavage and poly(A) addition. FIP1L1 contributes to poly(A) site recognition and stimulates poly(A) addition. Binds to U-rich RNA sequence elements surrounding the poly(A) site. May act to tether poly(A) polymerase to the CPSF complex. The sequence is that of Pre-mRNA 3'-end-processing factor FIP1 (Fip1l1) from Rattus norvegicus (Rat).